We begin with the raw amino-acid sequence, 500 residues long: Na(+)/H(+) antiporter NhaB (500 aa).

Transmembrane regions (helical) follow at residues 23–43 (VVICLFLVLNPLLLVTIGPVA), 53–73 (IFTLAMALKCYPLMPGGLLLI), 96–116 (VILLLMFMVAGIHFMKELLLF), 129–149 (AILALLFCVLSAFLSAFLDAL), 150–170 (TVTAVIISAAVGFYAVYHRVA), 205–225 (LLMHGAVGTALGGVCTLVGEP), 238–258 (FVDFFLKVAPVSLPVLGAGLV), 311–331 (ILIICLGLHVAEVGLIGLMVI), 350–370 (FQDAMPFTSLLVVFFAVVAVI), 450–470 (ATPNGQAAFLFLLTSAIAPLI), and 477–497 (MVWMALPYTVVMGGLGWWAVT).

Belongs to the NhaB Na(+)/H(+) (TC 2.A.34) antiporter family.

Its subcellular location is the cell inner membrane. The catalysed reaction is 2 Na(+)(in) + 3 H(+)(out) = 2 Na(+)(out) + 3 H(+)(in). Na(+)/H(+) antiporter that extrudes sodium in exchange for external protons. In Pseudomonas putida (strain ATCC 47054 / DSM 6125 / CFBP 8728 / NCIMB 11950 / KT2440), this protein is Na(+)/H(+) antiporter NhaB.